Reading from the N-terminus, the 130-residue chain is Large ribosomal subunit protein eL22 (130 aa).

Residues 1-21 form a disordered region; it reads MPGKTAQKGGRPSGKGKKKKQ. The short motif at 17-20 is the Nuclear localization signal element; sequence KKKK.

This sequence belongs to the eukaryotic ribosomal protein eL22 family.

The chain is Large ribosomal subunit protein eL22 (RPL22) from Tripneustes gratilla (Hawaian sea urchin).